Here is a 91-residue protein sequence, read N- to C-terminus: Potassium channel toxin BuTXK-beta (91 aa).

The first 20 residues, 1–20, serve as a signal peptide directing secretion; that stretch reads MQRNLVVLLLLGMVALSSCG. A propeptide spanning residues 21–27 is cleaved from the precursor; it reads LREKHFQ. Residues 54–91 form the BetaSPN-type CS-alpha/beta domain; the sequence is QFGCPAYQGYCDDHCQDIKKEEGFCHGMKCKCGIPMGF. Intrachain disulfides connect Cys57–Cys78, Cys64–Cys83, and Cys68–Cys85.

This sequence belongs to the long chain scorpion toxin family. Class 1 subfamily. In terms of tissue distribution, expressed by the venom gland.

The protein resides in the secreted. Its function is as follows. Inhibits voltage-gated potassium channel. The protein is Potassium channel toxin BuTXK-beta of Buthus israelis (Israeli scorpion).